The following is a 743-amino-acid chain: 1,4-alpha-glucan branching enzyme GlgB (743 aa).

D416 (nucleophile) is an active-site residue. Catalysis depends on E469, which acts as the Proton donor.

The protein belongs to the glycosyl hydrolase 13 family. GlgB subfamily. In terms of assembly, monomer.

It catalyses the reaction Transfers a segment of a (1-&gt;4)-alpha-D-glucan chain to a primary hydroxy group in a similar glucan chain.. The protein operates within glycan biosynthesis; glycogen biosynthesis. Catalyzes the formation of the alpha-1,6-glucosidic linkages in glycogen by scission of a 1,4-alpha-linked oligosaccharide from growing alpha-1,4-glucan chains and the subsequent attachment of the oligosaccharide to the alpha-1,6 position. This is 1,4-alpha-glucan branching enzyme GlgB from Shewanella baltica (strain OS223).